Consider the following 157-residue polypeptide: 2-C-methyl-D-erythritol 2,4-cyclodiphosphate synthase (157 aa).

Residues Asp-8 and His-10 each coordinate a divalent metal cation. Residues 8–10 (DVH) and 34–35 (HS) each bind 4-CDP-2-C-methyl-D-erythritol 2-phosphate. His-42 is a binding site for a divalent metal cation. Residues 56–58 (DIG), 61–65 (FPDTD), 132–135 (TTEE), and Phe-139 each bind 4-CDP-2-C-methyl-D-erythritol 2-phosphate.

This sequence belongs to the IspF family. In terms of assembly, homotrimer. It depends on a divalent metal cation as a cofactor.

The enzyme catalyses 4-CDP-2-C-methyl-D-erythritol 2-phosphate = 2-C-methyl-D-erythritol 2,4-cyclic diphosphate + CMP. The protein operates within isoprenoid biosynthesis; isopentenyl diphosphate biosynthesis via DXP pathway; isopentenyl diphosphate from 1-deoxy-D-xylulose 5-phosphate: step 4/6. In terms of biological role, involved in the biosynthesis of isopentenyl diphosphate (IPP) and dimethylallyl diphosphate (DMAPP), two major building blocks of isoprenoid compounds. Catalyzes the conversion of 4-diphosphocytidyl-2-C-methyl-D-erythritol 2-phosphate (CDP-ME2P) to 2-C-methyl-D-erythritol 2,4-cyclodiphosphate (ME-CPP) with a corresponding release of cytidine 5-monophosphate (CMP). The sequence is that of 2-C-methyl-D-erythritol 2,4-cyclodiphosphate synthase from Clostridium botulinum (strain Alaska E43 / Type E3).